A 239-amino-acid chain; its full sequence is DNA repair protein RecO (239 aa).

This sequence belongs to the RecO family.

Its function is as follows. Involved in DNA repair and RecF pathway recombination. In Cereibacter sphaeroides (strain KD131 / KCTC 12085) (Rhodobacter sphaeroides), this protein is DNA repair protein RecO.